The primary structure comprises 632 residues: MAU2 chromatid cohesion factor homolog (632 aa).

TPR repeat units lie at residues 453-486 and 493-526; these read GGFY…ANAE and SCSL…ASKI.

The protein belongs to the SCC4/mau-2 family. In terms of assembly, interacts with Nipped-B to form the cohesin loading complex.

The protein resides in the nucleus. Its subcellular location is the nucleoplasm. Functionally, required for association of the cohesin complex with chromatin during interphase. Plays a role in sister chromatid cohesion and normal progression through prometaphase. The sequence is that of MAU2 chromatid cohesion factor homolog from Drosophila yakuba (Fruit fly).